Here is a 530-residue protein sequence, read N- to C-terminus: Type II methyltransferase M.MjaII (530 aa).

This sequence belongs to the N(4)/N(6)-methyltransferase family. N(4) subfamily.

It catalyses the reaction a 2'-deoxycytidine in DNA + S-adenosyl-L-methionine = an N(4)-methyl-2'-deoxycytidine in DNA + S-adenosyl-L-homocysteine + H(+). In terms of biological role, an alpha subtype methylase that recognizes the double-stranded sequence 5'-GGNCC-3', methylates C-5 on both strands, and protects the DNA from cleavage by the MjaII endonuclease. The protein is Type II methyltransferase M.MjaII (mjaIIM) of Methanocaldococcus jannaschii (strain ATCC 43067 / DSM 2661 / JAL-1 / JCM 10045 / NBRC 100440) (Methanococcus jannaschii).